Reading from the N-terminus, the 440-residue chain is 2-alpha-hydroxytaxane 2-O-benzoyltransferase (440 aa).

Active-site proton acceptor residues include histidine 158 and aspartate 367.

The protein belongs to the plant acyltransferase family.

The catalysed reaction is 10-deacetyl-2-debenzoylbaccatin III + benzoyl-CoA = 10-deacetylbaccatin III + CoA. Its pathway is alkaloid biosynthesis; taxol biosynthesis; baccatin III from 10-deacetyl-2-debenzoylbaccatin III: step 1/2. In terms of biological role, catalyzes the conversion of 2-debenzoyl-7,13-diacetylbaccatin III, a semisynthetic substrate, to 7,13-diacetylbaccatin III. The protein is 2-alpha-hydroxytaxane 2-O-benzoyltransferase of Taxus cuspidata (Japanese yew).